The chain runs to 71 residues: UPF0352 protein VCM66_1964 (71 aa).

The protein belongs to the UPF0352 family.

This Vibrio cholerae serotype O1 (strain M66-2) protein is UPF0352 protein VCM66_1964.